A 443-amino-acid chain; its full sequence is Aspartate--tRNA(Asp/Asn) ligase (443 aa).

Position 175 (Glu175) interacts with L-aspartate. Positions 197–200 (QLFK) are aspartate. Arg219 is an L-aspartate binding site. ATP is bound by residues 219–221 (RAE), 227–229 (RHL), and Glu366. Mg(2+)-binding residues include Glu366 and Ser369. Residues Ser369 and Arg373 each contribute to the L-aspartate site. An ATP-binding site is contributed by 414–417 (GCER).

Belongs to the class-II aminoacyl-tRNA synthetase family. Type 2 subfamily. In terms of assembly, homodimer. Mg(2+) serves as cofactor.

The protein resides in the cytoplasm. It carries out the reaction tRNA(Asx) + L-aspartate + ATP = L-aspartyl-tRNA(Asx) + AMP + diphosphate. Its function is as follows. Aspartyl-tRNA synthetase with relaxed tRNA specificity since it is able to aspartylate not only its cognate tRNA(Asp) but also tRNA(Asn). Reaction proceeds in two steps: L-aspartate is first activated by ATP to form Asp-AMP and then transferred to the acceptor end of tRNA(Asp/Asn). This Methanococcoides burtonii (strain DSM 6242 / NBRC 107633 / OCM 468 / ACE-M) protein is Aspartate--tRNA(Asp/Asn) ligase.